A 147-amino-acid chain; its full sequence is HTH-type transcriptional regulator MntR (147 aa).

One can recognise an HTH dtxR-type domain in the interval 1 to 63 (MPTPSMEDYI…YEKYRGFVLT (63 aa)). Positions 8, 11, 77, 99, 102, and 103 each coordinate Mn(2+).

Belongs to the DtxR/MntR family. In terms of assembly, homodimer.

The protein resides in the cytoplasm. With respect to regulation, DNA binding is strongly activated by Mn(2+). Functionally, central regulator of manganese homeostasis. This chain is HTH-type transcriptional regulator MntR, found in Oceanobacillus iheyensis (strain DSM 14371 / CIP 107618 / JCM 11309 / KCTC 3954 / HTE831).